Reading from the N-terminus, the 300-residue chain is Quinolinate synthase (300 aa).

Residues H23 and S40 each coordinate iminosuccinate. C85 lines the [4Fe-4S] cluster pocket. Iminosuccinate is bound by residues 111-113 (YIN) and S128. C171 provides a ligand contact to [4Fe-4S] cluster. Iminosuccinate is bound by residues 198–200 (HPE) and T215. Residue C258 participates in [4Fe-4S] cluster binding.

The protein belongs to the quinolinate synthase family. Type 2 subfamily. The cofactor is [4Fe-4S] cluster.

Its subcellular location is the cytoplasm. It catalyses the reaction iminosuccinate + dihydroxyacetone phosphate = quinolinate + phosphate + 2 H2O + H(+). Its pathway is cofactor biosynthesis; NAD(+) biosynthesis; quinolinate from iminoaspartate: step 1/1. Catalyzes the condensation of iminoaspartate with dihydroxyacetone phosphate to form quinolinate. This is Quinolinate synthase from Clostridium novyi (strain NT).